A 155-amino-acid chain; its full sequence is MPEASSPFPDGIVLGFDVGTRRIGVAVGSALGAGARAVAVIDVHGVAVDWNALDRVKRNWLPVGLVVGDPLTLEGHDQPIRKQAHAFACQLRERYRLPVVLVDERSSSVEAASRFAGARAAGYKRRRDADTLDAIAAAVILERWLADPMQATSLP.

This sequence belongs to the YqgF nuclease family.

The protein localises to the cytoplasm. Functionally, could be a nuclease involved in processing of the 5'-end of pre-16S rRNA. This is Putative pre-16S rRNA nuclease from Xylella fastidiosa (strain M23).